A 348-amino-acid polypeptide reads, in one-letter code: 3-keto-steroid reductase (348 aa).

NADP(+) is bound by residues L18, T41, and R47. Active-site proton donor residues include S180 and Y203. 3 residues coordinate NADP(+): Y203, K207, and S238. The active-site Lowers pKa of active site Tyr is K207.

The protein belongs to the short-chain dehydrogenases/reductases (SDR) family. ERG27 subfamily.

The enzyme catalyses a 3beta-hydroxysteroid + NADP(+) = a 3-oxosteroid + NADPH + H(+). The protein operates within steroid biosynthesis; zymosterol biosynthesis; zymosterol from lanosterol: step 5/6. In terms of biological role, responsible for the reduction of the keto group on the C-3 of sterols. The chain is 3-keto-steroid reductase (ERG27) from Candida glabrata (strain ATCC 2001 / BCRC 20586 / JCM 3761 / NBRC 0622 / NRRL Y-65 / CBS 138) (Yeast).